Consider the following 208-residue polypeptide: Protein GrpE (208 aa).

Basic and acidic residues predominate over residues methionine 1–glutamine 27. The tract at residues methionine 1–alanine 65 is disordered. Residues methionine 45–alanine 64 are compositionally biased toward acidic residues.

This sequence belongs to the GrpE family. Homodimer.

The protein resides in the cytoplasm. Participates actively in the response to hyperosmotic and heat shock by preventing the aggregation of stress-denatured proteins, in association with DnaK and GrpE. It is the nucleotide exchange factor for DnaK and may function as a thermosensor. Unfolded proteins bind initially to DnaJ; upon interaction with the DnaJ-bound protein, DnaK hydrolyzes its bound ATP, resulting in the formation of a stable complex. GrpE releases ADP from DnaK; ATP binding to DnaK triggers the release of the substrate protein, thus completing the reaction cycle. Several rounds of ATP-dependent interactions between DnaJ, DnaK and GrpE are required for fully efficient folding. The sequence is that of Protein GrpE from Desulfatibacillum aliphaticivorans.